Consider the following 392-residue polypeptide: Cytochrome b (392 aa).

4 helical membrane passes run 38–58 (FGSL…FLAM), 82–104 (WLLR…LHIF), 119–139 (VRCL…TGYV), and 185–205 (FFSL…LHLA). Positions 88 and 102 each coordinate heme b. Residues His189 and His203 each coordinate heme b. His208 lines the a ubiquinone pocket. 4 helical membrane-spanning segments follow: residues 231-251 (FYVK…IWIF), 295-315 (SGGV…PFFK), 327-347 (IHQG…WIGC), and 354-373 (FVTI…AITP).

This sequence belongs to the cytochrome b family. The main subunits of complex b-c1 are: cytochrome b, cytochrome c1 and the Rieske protein. Heme b serves as cofactor.

It localises to the mitochondrion inner membrane. Its function is as follows. Component of the ubiquinol-cytochrome c reductase complex (complex III or cytochrome b-c1 complex) that is part of the mitochondrial respiratory chain. The b-c1 complex mediates electron transfer from ubiquinol to cytochrome c. Contributes to the generation of a proton gradient across the mitochondrial membrane that is then used for ATP synthesis. In Pisum sativum (Garden pea), this protein is Cytochrome b (MT-CYB).